A 309-amino-acid chain; its full sequence is Homoserine O-succinyltransferase (309 aa).

Cys-142 (acyl-thioester intermediate) is an active-site residue. The substrate site is built by Lys-163 and Ser-192. The active-site Proton acceptor is His-235. The active site involves Glu-237. Arg-249 provides a ligand contact to substrate.

It belongs to the MetA family. As to quaternary structure, homodimer.

The protein localises to the cytoplasm. It carries out the reaction L-homoserine + succinyl-CoA = O-succinyl-L-homoserine + CoA. It functions in the pathway amino-acid biosynthesis; L-methionine biosynthesis via de novo pathway; O-succinyl-L-homoserine from L-homoserine: step 1/1. Functionally, transfers a succinyl group from succinyl-CoA to L-homoserine, forming succinyl-L-homoserine. The polypeptide is Homoserine O-succinyltransferase (Salmonella gallinarum (strain 287/91 / NCTC 13346)).